A 765-amino-acid chain; its full sequence is Palmitoyltransferase ZDHHC8 (765 aa).

The Cytoplasmic segment spans residues 1–13 (MPRSPGTRLKPAK). Residues 14–34 (YIPVATAAALLVGSSTLFFVF) traverse the membrane as a helical segment. Residues 35-52 (TCPWLTRAVSPAVPVYNG) are Lumenal-facing. A helical membrane pass occupies residues 53-73 (IIFLFVLANFSMATFMDPGVF). The Cytoplasmic portion of the chain corresponds to 74–148 (PRADEDEDKE…NCIGRRNYRY (75 aa)). A DHHC domain is found at 104–154 (KWCATCHFYRPPRCSHCSVCDNCVEDFDHHCPWVNNCIGRRNYRYFFLFLL). Residue Cys134 is the S-palmitoyl cysteine intermediate of the active site. A helical transmembrane segment spans residues 149–169 (FFLFLLSLSAHMVGVVAFGLV). Residues 170–190 (YVLNHAEGLGAAHTTITMAVM) are Lumenal-facing. Residues 191–211 (CVAGLFFIPVIGLTGFHVVLV) form a helical membrane-spanning segment. Residues 212–765 (TRGRTTNEQV…VGGTTYEISV (554 aa)) are Cytoplasmic-facing. The tract at residues 293 to 352 (GLGRSKSKGSLDRLDEKPLDLGPPLPPKIEAGTFSSDLQTPRPGSAESALSVQRTSPPTP) is disordered. The segment covering 301–311 (GSLDRLDEKPL) has biased composition (basic and acidic residues). Phosphoserine is present on Ser337. Arg441 carries the post-translational modification Omega-N-methylarginine. Residues 509 to 540 (LHPGATGDPPRPLPRSFSPVLGPRPREPSPVR) are disordered. Phosphoserine is present on residues Ser606, Ser627, Ser675, Ser682, Ser725, and Ser743. Residues 613 to 747 (GPGFGGARNP…PGPSASPTRH (135 aa)) form a disordered region. Positions 622 to 653 (PALQTSLSSLSSSVSRAPRTSSSSLQADQASS) are enriched in low complexity.

This sequence belongs to the DHHC palmitoyltransferase family. ERF2/ZDHHC9 subfamily. As to expression, widely expressed.

It is found in the golgi apparatus membrane. Its subcellular location is the mitochondrion membrane. The catalysed reaction is L-cysteinyl-[protein] + hexadecanoyl-CoA = S-hexadecanoyl-L-cysteinyl-[protein] + CoA. In terms of biological role, palmitoyltransferase that catalyzes the addition of palmitate onto various protein substrates and therefore functions in several unrelated biological processes. Through the palmitoylation of ABCA1 regulates the localization of the transporter to the plasma membrane and thereby regulates its function in cholesterol and phospholipid efflux. Could also pamitoylate the D(2) dopamine receptor DRD2 and regulate its stability and localization to the plasma membrane. Could also play a role in glutamatergic transmission. (Microbial infection) Able to palmitoylate SARS coronavirus-2/SARS-CoV-2 spike protein following its synthesis in the endoplasmic reticulum (ER). In the infected cell, promotes spike biogenesis by protecting it from premature ER degradation, increases half-life and controls the lipid organization of its immediate membrane environment. Once the virus has formed, spike palmitoylation controls fusion with the target cell. The protein is Palmitoyltransferase ZDHHC8 of Homo sapiens (Human).